The following is a 625-amino-acid chain: Chaperone protein HtpG (625 aa).

Positions 1-337 (MSTNQETRGF…TNDLPLNVSR (337 aa)) are a; substrate-binding. The tract at residues 338–554 (EILQENKITA…NDEMTTQMAK (217 aa)) is b. A c region spans residues 555 to 625 (LFAAMGQKAP…FIKRMNKLLG (71 aa)).

It belongs to the heat shock protein 90 family. As to quaternary structure, homodimer.

Its subcellular location is the cytoplasm. In terms of biological role, molecular chaperone. Has ATPase activity. This chain is Chaperone protein HtpG, found in Actinobacillus pleuropneumoniae serotype 3 (strain JL03).